The primary structure comprises 368 residues: C2H2 type master regulator of conidiophore development BrlA (368 aa).

The C2H2-type 1; degenerate zinc finger occupies 268 to 292 (CKCDYPGCHKAFRRNEHLKRHKQTF). The segment at 300–323 (FSCEFCGKDQFNRQDNLNNHRKLH) adopts a C2H2-type 2 zinc-finger fold. The tract at residues 338–368 (AAVPIIEQEERSRKRRAPPKSKSADKRVDDY) is disordered. Basic and acidic residues predominate over residues 359–368 (KSADKRVDDY).

It is found in the nucleus. BrlA, abaA and wetA are pivotal regulators of conidiophore development and conidium maturation. They act individually and together to regulate their own expression and that of numerous other sporulation-specific genes. BrlA, abaA and wetA act together to positively regulate the expression of the Pks1 gene cluster that mediates the biosynthesis of an anthraquinone derivative pigment that contributes to conidial pigmentation that provides protection from UV radiation, heat and cold stress. This is C2H2 type master regulator of conidiophore development BrlA from Metarhizium robertsii (strain ARSEF 23 / ATCC MYA-3075) (Metarhizium anisopliae (strain ARSEF 23)).